Here is a 129-residue protein sequence, read N- to C-terminus: Small ribosomal subunit protein uS11 (129 aa).

It belongs to the universal ribosomal protein uS11 family. In terms of assembly, part of the 30S ribosomal subunit. Interacts with proteins S7 and S18. Binds to IF-3.

Functionally, located on the platform of the 30S subunit, it bridges several disparate RNA helices of the 16S rRNA. Forms part of the Shine-Dalgarno cleft in the 70S ribosome. The chain is Small ribosomal subunit protein uS11 from Desulfitobacterium hafniense (strain DSM 10664 / DCB-2).